The sequence spans 367 residues: Heme A synthase (367 aa).

The next 5 membrane-spanning stretches (helical) occupy residues 25–45, 111–131, 137–157, 174–194, and 211–231; these read AIRI…LVGG, FLAR…VLTG, LWLP…IGWW, LATH…FMRA, and LAGL…LVAG. His-274 contributes to the heme binding site. Transmembrane regions (helical) follow at residues 276 to 296, 305 to 325, and 327 to 347; these read LGAY…LRAA, SVVL…TLLL, and VPLH…GFAI. Position 335 (His-335) interacts with heme.

It belongs to the COX15/CtaA family. Type 2 subfamily. As to quaternary structure, interacts with CtaB. Heme b serves as cofactor.

It is found in the cell membrane. It catalyses the reaction Fe(II)-heme o + 2 A + H2O = Fe(II)-heme a + 2 AH2. It functions in the pathway porphyrin-containing compound metabolism; heme A biosynthesis; heme A from heme O: step 1/1. Its function is as follows. Catalyzes the conversion of heme O to heme A by two successive hydroxylations of the methyl group at C8. The first hydroxylation forms heme I, the second hydroxylation results in an unstable dihydroxymethyl group, which spontaneously dehydrates, resulting in the formyl group of heme A. The sequence is that of Heme A synthase from Rhizobium rhizogenes (strain K84 / ATCC BAA-868) (Agrobacterium radiobacter).